Reading from the N-terminus, the 98-residue chain is Cystatin-B (98 aa).

Methionine 1 carries the N-acetylmethionine modification. A Secondary area of contact motif is present at residues 46-50 (QVVAG).

The protein belongs to the cystatin family. Able to form dimers stabilized by noncovalent forces.

Its subcellular location is the cytoplasm. It localises to the nucleus. This is an intracellular thiol proteinase inhibitor. Tightly binding reversible inhibitor of cathepsins L, H and B. This is Cystatin-B (CSTB) from Pongo pygmaeus (Bornean orangutan).